We begin with the raw amino-acid sequence, 435 residues long: MVLPTLAIVGRPNVGKSTIFNRILGERVSIVEDTPGVTRDRIYGTSEWLGKEFAVIDTGGIDLGDEPFLAQIKDQAEIAIDEADVILFLADIESGVTDADERVAQILYRAKKPVVLAVNKVDNPERRQDIYDFYSLGFGEPYPLSGTHGIGLGDVLDAVLAAFPSEDKSVEDDSIKFSLIGRPNVGKSSLVNAILGENRVIVSPIEGTTRDAIDTKFEAVDETFTMIDTAGIRKRGKVYENTEKYAVMRALRAIDRSDVVLFVINAEEGIREQDKKVAGYAHEAGRGIIIVVNKWDTVEKDNHTMKDFENLIRQEFQYLDYAPIIFVSAKTKQRLQSLPAMIVAVSENQTRRIQSSVLNDVLMDAITVTPTPTVNGKRLRIYYMTQVAVKPPTFVVFVNDPDLLHFSYERFLINQLRQAFDFSGTPIHIIARKRK.

2 consecutive EngA-type G domains span residues Pro-4–Asp-167 and Ile-175–Thr-350. GTP-binding positions include Gly-10–Ser-17, Asp-57–Ile-61, Asn-119–Asp-122, Gly-181–Ser-188, Asp-228–Ile-232, and Asn-293–Asp-296. Residues Arg-351 to Lys-435 enclose the KH-like domain.

This sequence belongs to the TRAFAC class TrmE-Era-EngA-EngB-Septin-like GTPase superfamily. EngA (Der) GTPase family. In terms of assembly, associates with the 50S ribosomal subunit.

GTPase that plays an essential role in the late steps of ribosome biogenesis. The polypeptide is GTPase Der (Lacticaseibacillus casei (strain BL23) (Lactobacillus casei)).